We begin with the raw amino-acid sequence, 555 residues long: Urocanate hydratase (555 aa).

NAD(+)-binding positions include glycine 52 to glycine 53, glutamine 130, glycine 176 to glycine 178, glutamate 196, arginine 201, asparagine 242 to alanine 243, glutamine 263 to histidine 267, tyrosine 272 to leucine 273, and tyrosine 321. Residue cysteine 409 is part of the active site. Glycine 491 contacts NAD(+).

It belongs to the urocanase family. The cofactor is NAD(+).

The protein localises to the cytoplasm. The enzyme catalyses 4-imidazolone-5-propanoate = trans-urocanate + H2O. The protein operates within amino-acid degradation; L-histidine degradation into L-glutamate; N-formimidoyl-L-glutamate from L-histidine: step 2/3. In terms of biological role, catalyzes the conversion of urocanate to 4-imidazolone-5-propionate. This is Urocanate hydratase from Nocardioides sp. (strain ATCC BAA-499 / JS614).